The following is a 591-amino-acid chain: Aspartate--tRNA ligase (591 aa).

Glu172 is an L-aspartate binding site. The tract at residues 196-199 is aspartate; the sequence is QLFK. Arg218 is an L-aspartate binding site. ATP-binding positions include 218–220 and Gln227; that span reads RDE. Residue His449 coordinates L-aspartate. ATP is bound at residue Glu483. Arg490 lines the L-aspartate pocket. 535–538 is an ATP binding site; that stretch reads GLDR.

Belongs to the class-II aminoacyl-tRNA synthetase family. Type 1 subfamily. In terms of assembly, homodimer.

It localises to the cytoplasm. The catalysed reaction is tRNA(Asp) + L-aspartate + ATP = L-aspartyl-tRNA(Asp) + AMP + diphosphate. Functionally, catalyzes the attachment of L-aspartate to tRNA(Asp) in a two-step reaction: L-aspartate is first activated by ATP to form Asp-AMP and then transferred to the acceptor end of tRNA(Asp). The sequence is that of Aspartate--tRNA ligase from Actinobacillus pleuropneumoniae serotype 5b (strain L20).